The primary structure comprises 153 residues: Bacteriohemerythrin (153 aa).

Residues histidine 21, histidine 57, glutamate 61, histidine 76, histidine 80, histidine 115, and aspartate 120 each coordinate Fe cation.

Belongs to the hemerythrin family. As to quaternary structure, monomer.

Functionally, oxygen-binding protein. May be involved in a storage mechanism or for delivery to oxygen-requiring enzymes. The oxygen-binding site contains two iron atoms. This Pseudomonas paraeruginosa (strain DSM 24068 / PA7) (Pseudomonas aeruginosa (strain PA7)) protein is Bacteriohemerythrin.